The sequence spans 359 residues: Methyltransferase eqxD (359 aa).

Residues 198–199 (GG), D224, 248–249 (SF), R264, and R265 contribute to the S-adenosyl-L-methionine site.

Belongs to the class I-like SAM-binding methyltransferase superfamily. Cation-independent O-methyltransferase family.

It carries out the reaction trichosetin + S-adenosyl-L-methionine = equisetin + S-adenosyl-L-homocysteine + H(+). The protein operates within mycotoxin biosynthesis. Methyltransferase; part of the gene cluster that mediates the biosynthesis of equisetin, a trans-fused decalin-containing tetramic acid with antimicrobial activity. The PKS module of eqxS together with the enoylreductase eqxC catalyze the formation of the polyketide unit which is then conjugated to L-serine by the condensation domain of the eqxS NRPS module. Activity of the Dieckmann cyclase domain (RED) results in release of the Dieckmann product intermediate. Diels-Alderase eqx3 is involved in endo-selective Diels-Alder cycloaddition to form the decalin ring, leading to the production of N-desmethylequisetin also called trichosetin. Subsequent N-methylation is carried out by eqxD to give equisetin. The chain is Methyltransferase eqxD from Fusarium heterosporum.